The chain runs to 103 residues: Large ribosomal subunit protein bL21 (103 aa).

The protein belongs to the bacterial ribosomal protein bL21 family. In terms of assembly, part of the 50S ribosomal subunit. Contacts protein L20.

Its function is as follows. This protein binds to 23S rRNA in the presence of protein L20. This is Large ribosomal subunit protein bL21 from Azotobacter vinelandii (strain DJ / ATCC BAA-1303).